The sequence spans 117 residues: Putative small ubiquitin-related modifier 6 (117 aa).

The segment at Met1–His30 is disordered. A compositionally biased stretch (basic and acidic residues) spans Gly10–Ser28. Residues Val31–Gly108 form the Ubiquitin-like domain. Residue Gly108 forms a Glycyl lysine isopeptide (Gly-Lys) (interchain with K-? in acceptor proteins) linkage.

Belongs to the ubiquitin family. SUMO subfamily. As to quaternary structure, interacts with SAE2, SCE1, SIZ1 and MMS21 Covalently attached to a number of proteins.

The protein resides in the nucleus. The protein localises to the cytoplasm. Ubiquitin-like protein which can be covalently attached to target lysines as a monomer. Does not seem to be involved in protein degradation and may function as an antagonist of ubiquitin in the degradation process. This is Putative small ubiquitin-related modifier 6 (SUMO6) from Arabidopsis thaliana (Mouse-ear cress).